The chain runs to 345 residues: cAMP-responsive element modulator (345 aa).

Residues Val-88–Gly-147 form the KID domain. 5 positions are modified to phosphoserine: Ser-102, Ser-129, Ser-271, Ser-274, and Ser-277. Residues Thr-286–Tyr-345 enclose the bZIP domain. The basic motif stretch occupies residues Arg-287–Lys-312. The tract at residues Leu-314–Leu-335 is leucine-zipper.

Belongs to the bZIP family. In terms of assembly, binds DNA as a dimer. Interacts with FHL5. Interacts with CDC34. May interact with TSSK4. Post-translationally, isoform 9 is ubiquitinated by CDC34 and RAD6B in order to be degraded by the proteasome. In terms of processing, stimulated by phosphorylation. Phosphorylated on Ser-116 by TSSK4 in vitro. Expressed in testes (round spermatids) (at protein level). Isoform 14 is the major activator form in testes.

It localises to the nucleus. The protein resides in the cytoplasm. In terms of biological role, transcriptional regulator that binds the cAMP response element (CRE), a sequence present in many viral and cellular promoters. Isoforms are either transcriptional activators or repressors. Plays a role in spermatogenesis and is involved in spermatid maturation. Its function is as follows. May play a role in the regulation of the circadian clock: acts as a transcriptional repressor of the core circadian component PER1 by directly binding to cAMP response elements in its promoter. The polypeptide is cAMP-responsive element modulator (Homo sapiens (Human)).